Here is a 259-residue protein sequence, read N- to C-terminus: Phosphate import ATP-binding protein PstB (259 aa).

Residues 13 to 254 (IQVRDLNFYY…PAQRQTEDYI (242 aa)) form the ABC transporter domain. 45-52 (GPSGCGKS) contributes to the ATP binding site.

Belongs to the ABC transporter superfamily. Phosphate importer (TC 3.A.1.7) family. The complex is composed of two ATP-binding proteins (PstB), two transmembrane proteins (PstC and PstA) and a solute-binding protein (PstS).

It localises to the cell inner membrane. It catalyses the reaction phosphate(out) + ATP + H2O = ADP + 2 phosphate(in) + H(+). Part of the ABC transporter complex PstSACB involved in phosphate import. Responsible for energy coupling to the transport system. The polypeptide is Phosphate import ATP-binding protein PstB (Edwardsiella tarda).